The primary structure comprises 483 residues: NADH-quinone oxidoreductase subunit N (483 aa).

13 consecutive transmembrane segments (helical) span residues 11-31 (ALPE…DLFL), 37-57 (SLIY…TACT), 82-100 (LMMY…QYVS), 110-130 (FALT…QHFL), 164-184 (FVLG…LYGV), 205-225 (AVLV…LGAV), 239-259 (PTAV…AFMI), 268-288 (VLAI…ILIG), 301-321 (MLAY…MSAG), 329-349 (MFYI…MLLL), 372-392 (YAFL…TLGF), 406-426 (GFVG…FYYL), and 446-466 (PIDM…LGMF).

The protein belongs to the complex I subunit 2 family. As to quaternary structure, NDH-1 is composed of 14 different subunits. Subunits NuoA, H, J, K, L, M, N constitute the membrane sector of the complex.

It is found in the cell inner membrane. It catalyses the reaction a quinone + NADH + 5 H(+)(in) = a quinol + NAD(+) + 4 H(+)(out). NDH-1 shuttles electrons from NADH, via FMN and iron-sulfur (Fe-S) centers, to quinones in the respiratory chain. The immediate electron acceptor for the enzyme in this species is believed to be ubiquinone. Couples the redox reaction to proton translocation (for every two electrons transferred, four hydrogen ions are translocated across the cytoplasmic membrane), and thus conserves the redox energy in a proton gradient. This is NADH-quinone oxidoreductase subunit N from Methylovorus glucosotrophus (strain SIP3-4).